The primary structure comprises 600 residues: UvrABC system protein C (600 aa).

A GIY-YIG domain is found at 15–100; sequence NSTGVYQYFN…IKQLHPKYNI (86 aa). The region spanning 203-238 is the UVR domain; the sequence is SVLLKNLEKQMLVLAQNENYEEAAKVRDQIAMIKDL.

This sequence belongs to the UvrC family. In terms of assembly, interacts with UvrB in an incision complex.

The protein localises to the cytoplasm. The UvrABC repair system catalyzes the recognition and processing of DNA lesions. UvrC both incises the 5' and 3' sides of the lesion. The N-terminal half is responsible for the 3' incision and the C-terminal half is responsible for the 5' incision. In Campylobacter jejuni subsp. jejuni serotype O:2 (strain ATCC 700819 / NCTC 11168), this protein is UvrABC system protein C.